The primary structure comprises 204 residues: Putative 3-methyladenine DNA glycosylase (204 aa).

It belongs to the DNA glycosylase MPG family.

This is Putative 3-methyladenine DNA glycosylase from Mycobacterium sp. (strain KMS).